We begin with the raw amino-acid sequence, 214 residues long: Redox-sensing transcriptional repressor Rex (214 aa).

Residues 16-55 constitute a DNA-binding region (H-T-H motif); the sequence is LYYRYLIFLNDEGKEKVSSTELAEAVQVDSASIRRDFSYF. Residue 90-95 participates in NAD(+) binding; that stretch reads GVGNMG.

The protein belongs to the transcriptional regulatory Rex family. In terms of assembly, homodimer.

It localises to the cytoplasm. Modulates transcription in response to changes in cellular NADH/NAD(+) redox state. The sequence is that of Redox-sensing transcriptional repressor Rex from Lactobacillus gasseri (strain ATCC 33323 / DSM 20243 / BCRC 14619 / CIP 102991 / JCM 1131 / KCTC 3163 / NCIMB 11718 / NCTC 13722 / AM63).